The sequence spans 778 residues: E3 UFM1-protein ligase 1 homolog (778 aa).

The interval 404-477 (NNLSTSHDAD…TVQQSAGNTR (74 aa)) is disordered. Residues 445–457 (KSTKKHQRGRAAA) show a composition bias toward basic residues.

The protein belongs to the UFL1 family.

In terms of biological role, E3 UFM1-protein ligase that mediates ufmylation of target proteins. The protein is E3 UFM1-protein ligase 1 homolog of Drosophila virilis (Fruit fly).